We begin with the raw amino-acid sequence, 447 residues long: Protein mab-21-like 4 (447 aa).

This Homo sapiens (Human) protein is Protein mab-21-like 4.